The primary structure comprises 351 residues: Protein Wnt-2b-A (351 aa).

Positions 1–16 (MHFAYILILLILTPRV) are cleaved as a signal peptide. Intrachain disulfides connect cysteine 67–cysteine 78, cysteine 118–cysteine 126, cysteine 128–cysteine 148, cysteine 197–cysteine 211, cysteine 199–cysteine 206, cysteine 269–cysteine 300, cysteine 285–cysteine 295, cysteine 299–cysteine 339, cysteine 315–cysteine 330, cysteine 317–cysteine 327, and cysteine 322–cysteine 323. The N-linked (GlcNAc...) asparagine glycan is linked to asparagine 77. The O-palmitoleoyl serine; by PORCN moiety is linked to residue serine 203.

The protein belongs to the Wnt family. Post-translationally, palmitoleoylation is required for efficient binding to frizzled receptors. Depalmitoleoylation leads to Wnt signaling pathway inhibition. As to expression, expressed maternally in both vegetal and animal blastomeres with enrichment in the animal hemisphere. Expressed zygotically near the prosencephalic-mesencephalic boundary of the developing brain in neurula and tailbud stages, and also in non-brain areas at tadpole stages.

The protein resides in the secreted. Its subcellular location is the extracellular space. It is found in the extracellular matrix. Ligand for members of the frizzled family of seven transmembrane receptors. Functions in the canonical Wnt/beta-catenin signaling pathway. The chain is Protein Wnt-2b-A (wnt2b-a) from Xenopus laevis (African clawed frog).